The sequence spans 607 residues: Glutamyl-tRNA(Gln) amidotransferase subunit E (607 aa).

Residues Gly399 to Glu428 are disordered.

Belongs to the GatB/GatE family. GatE subfamily. As to quaternary structure, heterodimer of GatD and GatE.

The catalysed reaction is L-glutamyl-tRNA(Gln) + L-glutamine + ATP + H2O = L-glutaminyl-tRNA(Gln) + L-glutamate + ADP + phosphate + H(+). Its function is as follows. Allows the formation of correctly charged Gln-tRNA(Gln) through the transamidation of misacylated Glu-tRNA(Gln) in organisms which lack glutaminyl-tRNA synthetase. The reaction takes place in the presence of glutamine and ATP through an activated gamma-phospho-Glu-tRNA(Gln). The GatDE system is specific for glutamate and does not act on aspartate. The sequence is that of Glutamyl-tRNA(Gln) amidotransferase subunit E from Pyrobaculum neutrophilum (strain DSM 2338 / JCM 9278 / NBRC 100436 / V24Sta) (Thermoproteus neutrophilus).